A 229-amino-acid polypeptide reads, in one-letter code: Extracellular small neutral protease (229 aa).

The first 28 residues, 1-28 (MRMPLSVLTAAGLSLATLGLGTAGPASA), serve as a signal peptide directing secretion. A propeptide spanning residues 29–81 (TPTAEGAPVVAYDGSPSAGSPADAKAEAAANRAFFEAVLRSVAEKRAANPKST) is cleaved from the precursor. Ca(2+) is bound by residues aspartate 159 and threonine 161. Histidine 166 contacts Zn(2+). Residue glutamate 167 is part of the active site. Zn(2+) contacts are provided by histidine 170 and aspartate 176. Residues cysteine 182 and cysteine 195 are joined by a disulfide bond.

The protein belongs to the peptidase M7 family. As to quaternary structure, monomer. It depends on Ca(2+) as a cofactor. Requires Zn(2+) as cofactor.

The protein resides in the secreted. The enzyme catalyses Hydrolyzes proteins with a preference for Tyr or Phe in the P1' position. Has no action on amino-acid p-nitroanilides.. In terms of biological role, milk hydrolyzing. The protein is Extracellular small neutral protease (snpA) of Streptomyces sp. (strain C5).